The sequence spans 434 residues: MKSSPGLHIIIVGAGITGLATATSLRRAGHTVHLYEKSAQDNEIGAAIYVPPNVSQFLLPWGLDLDKWGFVKSQKVSFLHHASLETKMTLSDGMTAKGLTGAELYYAHRVDLHGCLRWMATRPEGPGRPATIHLMSNVVAYDPLAPSITLASGEVISADVVIGADGVRSDAVEAIIGDKVQTMRPRFANTCYRFLVPADAIEADPATQFWNEGSDGWSRVMIESVTGRSVVSYPCRSNTIHNFVLINNEENDTNMCAEDWHARFKIPDILKKFSDYDPRLLKVLSKAPDARRWPLIYRKPIHQWTKGCMTLAGDACHAMLPFLAQGGAQGIEDAVALGVVLQGATTRDDIQKRLQIYQEVRMKRASIIQILSNMGADHSVSVEDLKEYLNEDQMPYSQHDMMIHNYKYDVAEVAFEAMKRYDPSFRLGNDFLGR.

Residues 1–22 (MKSSPGLHIIIVGAGITGLATA) form the signal peptide. E36 provides a ligand contact to FAD. Catalysis depends on residues R193 and Y233. FAD contacts are provided by D314 and G327.

This sequence belongs to the paxM FAD-dependent monooxygenase family. In terms of assembly, monomer. FAD is required as a cofactor.

Its pathway is secondary metabolite biosynthesis; flavonoid biosynthesis. Monooxygenase; part of the gene cluster that mediates the biosynthesis of chlorflavonin, a fungal flavonoid with acetolactate synthase inhibitory activity. Within the pathway, cfoG is responsible for the hydroxylation of the flavonoid skeleton at position C8. The pathway begins with the PKS-NRPS hybrid synthetase cfoA that uses benzoic acid or p-hydroxybenzoic acid as a starter unit with four rounds of chain elongation using malonyl-CoA to form the chalcone skeleton. Then, a new type of chalcone isomerase, cfoK, catalyzes the conversion of the chalcone into a flavanone by a histidine-mediated oxa-Michael addition mechanism. The desaturation of flavanone to flavone is catalyzed by a new type of flavone synthase, the flavin mononucleotide (FMN)-dependent oxidoreductase cfoJ. Monooxygenases cfoF, cfoG, and P450 cfoH are responsible for the hydroxylation of the flavonoid skeleton at sites C3, C8, and C2', respectively. Like cfoF, the dehydratase cfoI plays also a role in the hydroxylation of position C3. Methyltransferases cfoB, cfoC, and cfoD then catalyze the methylation of C7-OH, C8-OH, and C3-OH, respectively. Finally, the monooxygenase cfoE is responsible for the chlorination of flavonoid at position C3'. The chain is FAD-dependent monooxygenase cfoG from Aspergillus candidus.